We begin with the raw amino-acid sequence, 145 residues long: Ribosomal protein uL24-like (145 aa).

Disordered stretches follow at residues 1–21 (MKFN…HFNA) and 122–145 (KAKS…KMQE). Residues Lys136 and Lys142 each participate in a glycyl lysine isopeptide (Lys-Gly) (interchain with G-Cter in SUMO2) cross-link.

Belongs to the universal ribosomal protein uL24 family.

This chain is Ribosomal protein uL24-like (RPL26L1), found in Homo sapiens (Human).